We begin with the raw amino-acid sequence, 602 residues long: RecBCD enzyme subunit RecD (602 aa).

171-178 (GGPGTGKT) is an ATP binding site.

This sequence belongs to the RecD family. In terms of assembly, heterotrimer of RecB, RecC and RecD. All subunits contribute to DNA-binding.

It carries out the reaction Couples ATP hydrolysis with the unwinding of duplex DNA at the replication fork by translocating in the 5'-3' direction. This creates two antiparallel DNA single strands (ssDNA). The leading ssDNA polymer is the template for DNA polymerase III holoenzyme which synthesizes a continuous strand.. The catalysed reaction is ATP + H2O = ADP + phosphate + H(+). A helicase/nuclease that prepares dsDNA breaks (DSB) for recombinational DNA repair. Binds to DSBs and unwinds DNA via a highly rapid and processive ATP-dependent bidirectional helicase activity. Unwinds dsDNA until it encounters a Chi (crossover hotspot instigator) sequence from the 3' direction. Cuts ssDNA a few nucleotides 3' to the Chi site. The properties and activities of the enzyme are changed at Chi. The Chi-altered holoenzyme produces a long 3'-ssDNA overhang and facilitates RecA-binding to the ssDNA for homologous DNA recombination and repair. Holoenzyme degrades any linearized DNA that is unable to undergo homologous recombination. In the holoenzyme this subunit has ssDNA-dependent ATPase and 5'-3' helicase activity. When added to pre-assembled RecBC greatly stimulates nuclease activity and augments holoenzyme processivity. Negatively regulates the RecA-loading ability of RecBCD. This chain is RecBCD enzyme subunit RecD, found in Buchnera aphidicola subsp. Acyrthosiphon pisum (strain APS) (Acyrthosiphon pisum symbiotic bacterium).